The chain runs to 427 residues: A-adding tRNA nucleotidyltransferase (427 aa).

49–52 (GTVR) is an ATP binding site. Residues D62 and D64 each contribute to the Mg(2+) site. Residues 136–137 (RD), N141, 181–190 (DPTRLLRGVR), R194, and R225 each bind ATP.

The protein belongs to the tRNA nucleotidyltransferase/poly(A) polymerase family. The cofactor is Mg(2+).

It carries out the reaction a tRNA with a 3' CC end + ATP = a tRNA with a 3' CCA end + diphosphate. Functionally, tRNA nucleotidyltransferase involved in the synthesis of the tRNA CCA terminus. Adds the terminal adenosine residue to tRNA. The polypeptide is A-adding tRNA nucleotidyltransferase (Halalkalibacterium halodurans (strain ATCC BAA-125 / DSM 18197 / FERM 7344 / JCM 9153 / C-125) (Bacillus halodurans)).